A 341-amino-acid chain; its full sequence is GTP 3',8-cyclase (341 aa).

Positions 11 to 231 constitute a Radical SAM core domain; that stretch reads QKSRPLRDLR…RIINEDMPIE (221 aa). Position 20 (Arg-20) interacts with GTP. [4Fe-4S] cluster contacts are provided by Cys-27 and Cys-31. Residue Tyr-33 participates in S-adenosyl-L-methionine binding. Cys-34 contributes to the [4Fe-4S] cluster binding site. Arg-75 is a binding site for GTP. S-adenosyl-L-methionine is bound at residue Gly-79. Thr-106 contacts GTP. S-adenosyl-L-methionine is bound at residue Ser-130. Lys-167 contacts GTP. Met-201 serves as a coordination point for S-adenosyl-L-methionine. Cys-265 and Cys-268 together coordinate [4Fe-4S] cluster. 270 to 272 provides a ligand contact to GTP; that stretch reads RAR. Cys-282 serves as a coordination point for [4Fe-4S] cluster.

The protein belongs to the radical SAM superfamily. MoaA family. In terms of assembly, monomer and homodimer. The cofactor is [4Fe-4S] cluster.

It carries out the reaction GTP + AH2 + S-adenosyl-L-methionine = (8S)-3',8-cyclo-7,8-dihydroguanosine 5'-triphosphate + 5'-deoxyadenosine + L-methionine + A + H(+). It participates in cofactor biosynthesis; molybdopterin biosynthesis. In terms of biological role, catalyzes the cyclization of GTP to (8S)-3',8-cyclo-7,8-dihydroguanosine 5'-triphosphate. This chain is GTP 3',8-cyclase, found in Bacillus licheniformis (strain ATCC 14580 / DSM 13 / JCM 2505 / CCUG 7422 / NBRC 12200 / NCIMB 9375 / NCTC 10341 / NRRL NRS-1264 / Gibson 46).